Here is a 98-residue protein sequence, read N- to C-terminus: Large ribosomal subunit protein uL23 (98 aa).

It belongs to the universal ribosomal protein uL23 family. Part of the 50S ribosomal subunit. Contacts protein L29, and trigger factor when it is bound to the ribosome.

In terms of biological role, one of the early assembly proteins it binds 23S rRNA. One of the proteins that surrounds the polypeptide exit tunnel on the outside of the ribosome. Forms the main docking site for trigger factor binding to the ribosome. This is Large ribosomal subunit protein uL23 from Koribacter versatilis (strain Ellin345).